A 639-amino-acid chain; its full sequence is Threonine--tRNA ligase (639 aa).

The TGS domain occupies M1–T61. The tract at residues D242–P533 is catalytic. Zn(2+)-binding residues include C333, H384, and H510.

It belongs to the class-II aminoacyl-tRNA synthetase family. In terms of assembly, homodimer. Zn(2+) is required as a cofactor.

The protein resides in the cytoplasm. It catalyses the reaction tRNA(Thr) + L-threonine + ATP = L-threonyl-tRNA(Thr) + AMP + diphosphate + H(+). Catalyzes the attachment of threonine to tRNA(Thr) in a two-step reaction: L-threonine is first activated by ATP to form Thr-AMP and then transferred to the acceptor end of tRNA(Thr). Also edits incorrectly charged L-seryl-tRNA(Thr). This chain is Threonine--tRNA ligase, found in Acidovorax ebreus (strain TPSY) (Diaphorobacter sp. (strain TPSY)).